The sequence spans 218 residues: Small ribosomal subunit protein uS3c (218 aa).

A KH type-2 domain is found at 47–118; sequence VQKHMRISSG…RLNIAIARVA (72 aa).

The protein belongs to the universal ribosomal protein uS3 family. Part of the 30S ribosomal subunit.

Its subcellular location is the plastid. The protein localises to the chloroplast. In Nymphaea alba (White water-lily), this protein is Small ribosomal subunit protein uS3c (rps3).